The sequence spans 353 residues: L-tryptophan dehydrogenase (353 aa).

Arg44 contributes to the NAD(+) binding site. Lys80 acts as the Proton donor/acceptor in catalysis. NAD(+) is bound by residues Asp114, Thr146, Gly176–Gly181, Lys204, and Ala255–Asn257.

Belongs to the Glu/Leu/Phe/Val dehydrogenases family. As to quaternary structure, homodimer.

It carries out the reaction L-tryptophan + NAD(+) + H2O = indole-3-pyruvate + NH4(+) + NADH + H(+). Its activity is regulated as follows. Highly susceptible to inhibition by indole-3-pyruvate. Activity is not affected by the presence of metal ions, EDTA, KCl or DMSO. Its function is as follows. Catalyzes the reversible oxidative deamination of L-tryptophan to indole-3-pyruvate in the presence of NAD(+). Shows weak activity with L-phenylalanine, but cannot use other L-amino acids and D-Trp. Cannot use NADP(+) for oxidative deamination of L-Trp, and shows only weak activity with NADPH for reductive amination of indole-3-pyruvate. Involved in the biosynthesis of scytonemin, a cyanobacterial radiation-absorbing pigment. The protein is L-tryptophan dehydrogenase of Nostoc punctiforme.